Consider the following 717-residue polypeptide: DNA ligase (717 aa).

NAD(+)-binding positions include 44-48 (DADYD), 93-94 (SL), and Glu127. Lys129 functions as the N6-AMP-lysine intermediate in the catalytic mechanism. NAD(+) is bound by residues Arg150, Glu186, Lys302, and Lys326. Zn(2+) is bound by residues Cys431, Cys434, Cys455, and Cys461. One can recognise a BRCT domain in the interval 639 to 717 (ATDSPVAGKT…EDEWLALIGG (79 aa)).

Belongs to the NAD-dependent DNA ligase family. LigA subfamily. Mg(2+) is required as a cofactor. The cofactor is Mn(2+).

The enzyme catalyses NAD(+) + (deoxyribonucleotide)n-3'-hydroxyl + 5'-phospho-(deoxyribonucleotide)m = (deoxyribonucleotide)n+m + AMP + beta-nicotinamide D-nucleotide.. DNA ligase that catalyzes the formation of phosphodiester linkages between 5'-phosphoryl and 3'-hydroxyl groups in double-stranded DNA using NAD as a coenzyme and as the energy source for the reaction. It is essential for DNA replication and repair of damaged DNA. This Sinorhizobium medicae (strain WSM419) (Ensifer medicae) protein is DNA ligase.